A 197-amino-acid polypeptide reads, in one-letter code: Small ribosomal subunit protein uS2 (197 aa).

It belongs to the universal ribosomal protein uS2 family.

This Archaeoglobus fulgidus (strain ATCC 49558 / DSM 4304 / JCM 9628 / NBRC 100126 / VC-16) protein is Small ribosomal subunit protein uS2 (rps2).